The following is a 182-amino-acid chain: Putative adenylate kinase (182 aa).

ATP is bound by residues glycine 10, glycine 12, lysine 13, threonine 14, and serine 15. The segment at 30–53 is NMP; the sequence is HLNEMIKEEHLYTEVDEVRDAVIA. Residues 104-114 are LID; it reads ARGYSEEKIRE. ATP contacts are provided by arginine 105 and lysine 143.

This sequence belongs to the adenylate kinase family. AK6 subfamily. Interacts with uS11. Not a structural component of 40S pre-ribosomes, but transiently interacts with them by binding to uS11.

It catalyses the reaction AMP + ATP = 2 ADP. The catalysed reaction is ATP + H2O = ADP + phosphate + H(+). Broad-specificity nucleoside monophosphate (NMP) kinase that catalyzes the reversible transfer of the terminal phosphate group between nucleoside triphosphates and monophosphates. Also has ATPase activity. Involved in the late maturation steps of the 30S ribosomal particles, specifically 16S rRNA maturation. While NMP activity is not required for ribosome maturation, ATPase activity is. Associates transiently with small ribosomal subunit protein uS11. ATP hydrolysis breaks the interaction with uS11. May temporarily remove uS11 from the ribosome to enable a conformational change of the ribosomal RNA that is needed for the final maturation step of the small ribosomal subunit. This is Putative adenylate kinase from Methanosarcina barkeri (strain Fusaro / DSM 804).